The primary structure comprises 57 residues: uncharacterized protein (57 aa).

The chain crosses the membrane as a helical span at residues 34–51 (TALLDAAAVVVVPGLLAA).

It is found in the membrane. This is an uncharacterized protein from Dictyostelium discoideum (Social amoeba).